The sequence spans 1901 residues: Protein TIC 214 (1901 aa).

6 helical membrane passes run 18 to 38, 64 to 84, 87 to 107, 124 to 144, 172 to 192, and 221 to 241; these read IINS…FSIG, FITG…HLAL, PHTI…WNNH, LSIQ…HFIL, VGWL…LVWI, and IFSI…PSPI. 3 disordered regions span residues 248–299, 797–817, and 1591–1618; these read EASK…EERW, REEQ…ENKR, and IQEA…LGPV. The span at 256–268 shows a compositional bias: acidic residues; it reads VESEEERDVEIET. The segment covering 1591–1611 has biased composition (basic and acidic residues); sequence IQEAKEPASQGEKERGSDIEN.

This sequence belongs to the TIC214 family. As to quaternary structure, part of the Tic complex.

The protein localises to the plastid. Its subcellular location is the chloroplast inner membrane. Functionally, involved in protein precursor import into chloroplasts. May be part of an intermediate translocation complex acting as a protein-conducting channel at the inner envelope. The polypeptide is Protein TIC 214 (Nicotiana sylvestris (Wood tobacco)).